The sequence spans 208 residues: Uridine kinase (208 aa).

11 to 18 (GGTGSGKS) provides a ligand contact to ATP.

The protein belongs to the uridine kinase family.

Its subcellular location is the cytoplasm. The catalysed reaction is uridine + ATP = UMP + ADP + H(+). It carries out the reaction cytidine + ATP = CMP + ADP + H(+). It participates in pyrimidine metabolism; CTP biosynthesis via salvage pathway; CTP from cytidine: step 1/3. The protein operates within pyrimidine metabolism; UMP biosynthesis via salvage pathway; UMP from uridine: step 1/1. The protein is Uridine kinase of Clostridium novyi (strain NT).